A 228-amino-acid chain; its full sequence is UPF0134 protein MPN_137 (228 aa).

Belongs to the UPF0134 family.

In Mycoplasma pneumoniae (strain ATCC 29342 / M129 / Subtype 1) (Mycoplasmoides pneumoniae), this protein is UPF0134 protein MPN_137.